Reading from the N-terminus, the 427-residue chain is 3-phosphoshikimate 1-carboxyvinyltransferase (427 aa).

Residues Lys-23, Ser-24, and Arg-28 each contribute to the 3-phosphoshikimate site. A phosphoenolpyruvate-binding site is contributed by Lys-23. Phosphoenolpyruvate is bound by residues Gly-97 and Arg-125. 7 residues coordinate 3-phosphoshikimate: Ser-170, Ser-171, Gln-172, Ser-198, Asp-314, Asn-337, and Lys-341. Gln-172 serves as a coordination point for phosphoenolpyruvate. The active-site Proton acceptor is the Asp-314. Residues Arg-345, Arg-387, and Lys-412 each contribute to the phosphoenolpyruvate site.

The protein belongs to the EPSP synthase family. As to quaternary structure, monomer.

Its subcellular location is the cytoplasm. The enzyme catalyses 3-phosphoshikimate + phosphoenolpyruvate = 5-O-(1-carboxyvinyl)-3-phosphoshikimate + phosphate. It participates in metabolic intermediate biosynthesis; chorismate biosynthesis; chorismate from D-erythrose 4-phosphate and phosphoenolpyruvate: step 6/7. Functionally, catalyzes the transfer of the enolpyruvyl moiety of phosphoenolpyruvate (PEP) to the 5-hydroxyl of shikimate-3-phosphate (S3P) to produce enolpyruvyl shikimate-3-phosphate and inorganic phosphate. The sequence is that of 3-phosphoshikimate 1-carboxyvinyltransferase from Buchnera aphidicola subsp. Acyrthosiphon pisum (strain 5A).